Here is a 51-residue protein sequence, read N- to C-terminus: Ribosome biogenesis protein Nop10 (51 aa).

This sequence belongs to the NOP10 family.

In terms of biological role, involved in ribosome biogenesis; more specifically in 18S rRNA pseudouridylation and in cleavage of pre-rRNA. The protein is Ribosome biogenesis protein Nop10 of Nitrosopumilus maritimus (strain SCM1).